Consider the following 320-residue polypeptide: Bifunctional ligase/repressor BirA (320 aa).

Residues 22–41 (GEQLGERLGMSRAAINKHIQ) constitute a DNA-binding region (H-T-H motif). Residues 66-254 (LLDADRIHSQ…KLRAALELFE (189 aa)) form the BPL/LPL catalytic domain. Biotin is bound by residues 89 to 91 (STN), Gln112, 116 to 118 (RGR), and Lys183.

It belongs to the biotin--protein ligase family.

The enzyme catalyses biotin + L-lysyl-[protein] + ATP = N(6)-biotinyl-L-lysyl-[protein] + AMP + diphosphate + H(+). Functionally, acts both as a biotin--[acetyl-CoA-carboxylase] ligase and a biotin-operon repressor. In the presence of ATP, BirA activates biotin to form the BirA-biotinyl-5'-adenylate (BirA-bio-5'-AMP or holoBirA) complex. HoloBirA can either transfer the biotinyl moiety to the biotin carboxyl carrier protein (BCCP) subunit of acetyl-CoA carboxylase, or bind to the biotin operator site and inhibit transcription of the operon. This chain is Bifunctional ligase/repressor BirA, found in Salmonella typhimurium (strain LT2 / SGSC1412 / ATCC 700720).